A 588-amino-acid polypeptide reads, in one-letter code: DNA mismatch repair protein MutL (588 aa).

Belongs to the DNA mismatch repair MutL/HexB family.

Functionally, this protein is involved in the repair of mismatches in DNA. It is required for dam-dependent methyl-directed DNA mismatch repair. May act as a 'molecular matchmaker', a protein that promotes the formation of a stable complex between two or more DNA-binding proteins in an ATP-dependent manner without itself being part of a final effector complex. This chain is DNA mismatch repair protein MutL, found in Methanocorpusculum labreanum (strain ATCC 43576 / DSM 4855 / Z).